The chain runs to 560 residues: Radial spoke head protein 3 homolog (560 aa).

Disordered stretches follow at residues Arg-134–Met-186 and Ala-225–Gly-249. Residues Arg-153–Ser-162 are compositionally biased toward polar residues. A coiled-coil region spans residues Asp-215–Leu-239. Thr-286 is subject to Phosphothreonine; by MAPK1. A coiled-coil region spans residues Leu-331–Met-385. Disordered stretches follow at residues Asn-354 to Glu-375, His-473 to Glu-498, and Asp-526 to Ser-560.

It belongs to the flagellar radial spoke RSP3 family. As to quaternary structure, component of the axonemal radial spoke 1 (RS1) and 2 (RS2) complexes, at least composed of spoke head proteins RSPH1, RSPH3, RSPH9 and the cilia-specific component RSPH4A or sperm-specific component RSPH6A, spoke stalk proteins RSPH14, DNAJB13, DYDC1, ROPN1L and NME5, and the RS1 complex-specific anchor protein IQUB. Interacts with IQUB. Interacts with phosphorylated MAPK1. Interacts with MEK1. Interacts with PKA regulatory subunits PRKAR1A and PRKAR1B. Interacts with RSPH1. Interacts with RSPH4A. Interacts with RSPH6A. Interacts with RSPH9. Interacts with LRRC23.

The protein resides in the cytoplasm. It is found in the cytoskeleton. Its subcellular location is the cilium axoneme. It localises to the flagellum axoneme. Functionally, functions as part of axonemal radial spoke complexes that play an important part in the motility of sperm and cilia. Functions as a protein kinase A-anchoring protein that scaffolds the cAMP-dependent protein kinase holoenzyme. May serve as a point of convergence for MAPK and PKA signaling in cilia. This chain is Radial spoke head protein 3 homolog (RSPH3), found in Homo sapiens (Human).